A 194-amino-acid chain; its full sequence is Elongation factor P (194 aa).

Belongs to the elongation factor P family.

It localises to the cytoplasm. The protein operates within protein biosynthesis; polypeptide chain elongation. Involved in peptide bond synthesis. Stimulates efficient translation and peptide-bond synthesis on native or reconstituted 70S ribosomes in vitro. Probably functions indirectly by altering the affinity of the ribosome for aminoacyl-tRNA, thus increasing their reactivity as acceptors for peptidyl transferase. In Hydrogenobaculum sp. (strain Y04AAS1), this protein is Elongation factor P.